The primary structure comprises 321 residues: Phosphopantothenate--cysteine ligase 1 (321 aa).

This sequence belongs to the PPC synthetase family. Homodimer.

It catalyses the reaction (R)-4'-phosphopantothenate + L-cysteine + CTP = N-[(R)-4-phosphopantothenoyl]-L-cysteine + CMP + diphosphate + H(+). Its pathway is cofactor biosynthesis; coenzyme A biosynthesis; CoA from (R)-pantothenate: step 2/5. Catalyzes the first step in the biosynthesis of coenzyme A from vitamin B5, where cysteine is conjugated to 4'-phosphopantothenate to form 4-phosphopantothenoylcysteine. The sequence is that of Phosphopantothenate--cysteine ligase 1 from Oryza sativa subsp. japonica (Rice).